The chain runs to 411 residues: MPKKFGRIHLVVMDSVGIGAAPDADKFFNHDVETHEAINDVNSDTIGHISEIRGLDVPNLQKLGWGNIPRESPLKTVPKADKPAAYVTKLEEISKGKDTMTGHWEIMGLNIQTPFPTYPEGYPEDLLEKIEEFSGRKIIREANKPYSGTAVIEDFGPRQLETGELIIYTSADPVLQIAAHEDVISREELYKICEYVRSITLEGSGIMIGRIIARPYVGEAGNFERTDGRRDYALSPFAETVLEKLYKAGIDTYSVGKISDIFNTVGVKYDMGHNHNDMDGVDRLLKAMTKAEFTEGFSFTNLVDFDAKYGHRRDVEGYGKAIEDFDGRLPEIIDVMKEDDLLMITADHGNDPSYVGTDHTREYIPLVIFSKSLKDPKVLPVGHFADISATVAENFSVKKAQTGESFLDALV.

Residues aspartate 14, aspartate 306, histidine 311, aspartate 347, histidine 348, and histidine 359 each contribute to the Mn(2+) site.

This sequence belongs to the phosphopentomutase family. Mn(2+) is required as a cofactor.

The protein resides in the cytoplasm. The enzyme catalyses 2-deoxy-alpha-D-ribose 1-phosphate = 2-deoxy-D-ribose 5-phosphate. It carries out the reaction alpha-D-ribose 1-phosphate = D-ribose 5-phosphate. The protein operates within carbohydrate degradation; 2-deoxy-D-ribose 1-phosphate degradation; D-glyceraldehyde 3-phosphate and acetaldehyde from 2-deoxy-alpha-D-ribose 1-phosphate: step 1/2. Its function is as follows. Isomerase that catalyzes the conversion of deoxy-ribose 1-phosphate (dRib-1-P) and ribose 1-phosphate (Rib-1-P) to deoxy-ribose 5-phosphate (dRib-5-P) and ribose 5-phosphate (Rib-5-P), respectively. The sequence is that of Phosphopentomutase from Lactococcus lactis subsp. lactis (strain IL1403) (Streptococcus lactis).